A 423-amino-acid polypeptide reads, in one-letter code: Serine hydroxymethyltransferase (423 aa).

Residues leucine 125 and 129 to 131 (GHL) each bind (6S)-5,6,7,8-tetrahydrofolate. Position 234 is an N6-(pyridoxal phosphate)lysine (lysine 234). Glutamate 249 is a (6S)-5,6,7,8-tetrahydrofolate binding site.

The protein belongs to the SHMT family. In terms of assembly, homodimer. The cofactor is pyridoxal 5'-phosphate.

It is found in the cytoplasm. It catalyses the reaction (6R)-5,10-methylene-5,6,7,8-tetrahydrofolate + glycine + H2O = (6S)-5,6,7,8-tetrahydrofolate + L-serine. It participates in one-carbon metabolism; tetrahydrofolate interconversion. The protein operates within amino-acid biosynthesis; glycine biosynthesis; glycine from L-serine: step 1/1. Its function is as follows. Catalyzes the reversible interconversion of serine and glycine with tetrahydrofolate (THF) serving as the one-carbon carrier. This reaction serves as the major source of one-carbon groups required for the biosynthesis of purines, thymidylate, methionine, and other important biomolecules. Also exhibits THF-independent aldolase activity toward beta-hydroxyamino acids, producing glycine and aldehydes, via a retro-aldol mechanism. The polypeptide is Serine hydroxymethyltransferase (Thermobifida fusca (strain YX)).